The primary structure comprises 201 residues: Holliday junction branch migration complex subunit RuvA (201 aa).

A domain I region spans residues 1 to 63 (MIEFVRGYVD…EDTLALYGFR (63 aa)). Residues 64-142 (TREERTLFAK…AVTAKTFPDL (79 aa)) are domain II. The flexible linker stretch occupies residues 143-153 (FHLQEESARPH). Positions 153–201 (HLSALEEAIEALKALGYAEREIQKVVPSLMKENLSTDQYVKRALQQLLK) are domain III.

This sequence belongs to the RuvA family. In terms of assembly, homotetramer. Forms an RuvA(8)-RuvB(12)-Holliday junction (HJ) complex. HJ DNA is sandwiched between 2 RuvA tetramers; dsDNA enters through RuvA and exits via RuvB. An RuvB hexamer assembles on each DNA strand where it exits the tetramer. Each RuvB hexamer is contacted by two RuvA subunits (via domain III) on 2 adjacent RuvB subunits; this complex drives branch migration. In the full resolvosome a probable DNA-RuvA(4)-RuvB(12)-RuvC(2) complex forms which resolves the HJ.

The protein resides in the cytoplasm. The RuvA-RuvB-RuvC complex processes Holliday junction (HJ) DNA during genetic recombination and DNA repair, while the RuvA-RuvB complex plays an important role in the rescue of blocked DNA replication forks via replication fork reversal (RFR). RuvA specifically binds to HJ cruciform DNA, conferring on it an open structure. The RuvB hexamer acts as an ATP-dependent pump, pulling dsDNA into and through the RuvAB complex. HJ branch migration allows RuvC to scan DNA until it finds its consensus sequence, where it cleaves and resolves the cruciform DNA. The protein is Holliday junction branch migration complex subunit RuvA of Geobacillus sp. (strain WCH70).